Reading from the N-terminus, the 346-residue chain is Phosphoribosylformylglycinamidine cyclo-ligase (346 aa).

It belongs to the AIR synthase family.

The protein localises to the cytoplasm. It catalyses the reaction 2-formamido-N(1)-(5-O-phospho-beta-D-ribosyl)acetamidine + ATP = 5-amino-1-(5-phospho-beta-D-ribosyl)imidazole + ADP + phosphate + H(+). Its pathway is purine metabolism; IMP biosynthesis via de novo pathway; 5-amino-1-(5-phospho-D-ribosyl)imidazole from N(2)-formyl-N(1)-(5-phospho-D-ribosyl)glycinamide: step 2/2. This is Phosphoribosylformylglycinamidine cyclo-ligase from Bacillus cereus (strain AH187).